The primary structure comprises 29 residues: Trypsin inhibitor 3 (29 aa).

Intrachain disulfides connect C3–C20, C10–C22, and C16–C28.

The protein belongs to the protease inhibitor I7 (squash-type serine protease inhibitor) family.

Its subcellular location is the secreted. In terms of biological role, inhibits trypsin. The polypeptide is Trypsin inhibitor 3 (Luffa aegyptiaca (Sponge gourd)).